We begin with the raw amino-acid sequence, 506 residues long: Tabersonine 3-oxygenase (506 aa).

The Lumenal segment spans residues M1–E5. Residues S6–L26 traverse the membrane as a helical segment. Residues R27 to A506 are Cytoplasmic-facing. Position 450 (C450) interacts with heme.

Belongs to the cytochrome P450 family. Heme is required as a cofactor. In terms of tissue distribution, expressed in leaf epidermis.

It is found in the endoplasmic reticulum membrane. The enzyme catalyses 16-methoxytabersonine + reduced [NADPH--hemoprotein reductase] + O2 = (3R)-1,2-didehydro-3-hydroxy-16-methoxy-2,3-dihydrotabersonine + oxidized [NADPH--hemoprotein reductase] + H2O + H(+). It catalyses the reaction (-)-tabersonine + reduced [NADPH--hemoprotein reductase] + O2 = (3R)-1,2-didehydro-3-hydroxy-2,3-dihydrotabersonine + oxidized [NADPH--hemoprotein reductase] + H2O + H(+). It participates in alkaloid biosynthesis; vindoline biosynthesis. In terms of biological role, cytochrome P450 catalyzing the monooxygenation of 16-methoxytabersonine, 16-hydroxytabersonine and tabersonine, but not of 2,3-dihydrotabersonine. Converts the C2,C3 alkene of tabersonine and 16-methoxytabersonine to the epoxides, which then spontaneously open to form the corresponding imine alcohols. Inactive in converting amyrin to ursolic acid. This chain is Tabersonine 3-oxygenase, found in Catharanthus roseus (Madagascar periwinkle).